A 319-amino-acid polypeptide reads, in one-letter code: Beta-ketoacyl-[acyl-carrier-protein] synthase III (319 aa).

Catalysis depends on residues C110 and H246. Residues 247–251 (QANYR) are ACP-binding. Residue N276 is part of the active site.

It belongs to the thiolase-like superfamily. FabH family. Homodimer.

The protein resides in the cytoplasm. The enzyme catalyses malonyl-[ACP] + acetyl-CoA + H(+) = 3-oxobutanoyl-[ACP] + CO2 + CoA. It participates in lipid metabolism; fatty acid biosynthesis. Functionally, catalyzes the condensation reaction of fatty acid synthesis by the addition to an acyl acceptor of two carbons from malonyl-ACP. Catalyzes the first condensation reaction which initiates fatty acid synthesis and may therefore play a role in governing the total rate of fatty acid production. Possesses both acetoacetyl-ACP synthase and acetyl transacylase activities. Its substrate specificity determines the biosynthesis of branched-chain and/or straight-chain of fatty acids. This is Beta-ketoacyl-[acyl-carrier-protein] synthase III from Lactobacillus delbrueckii subsp. bulgaricus (strain ATCC 11842 / DSM 20081 / BCRC 10696 / JCM 1002 / NBRC 13953 / NCIMB 11778 / NCTC 12712 / WDCM 00102 / Lb 14).